Reading from the N-terminus, the 452-residue chain is CCA-adding enzyme (452 aa).

Positions 54 and 57 each coordinate ATP. 2 residues coordinate CTP: Ser-54 and Arg-57. The Mg(2+) site is built by Asp-66, Asp-68, and Asp-117. His-140, Lys-160, and Tyr-169 together coordinate ATP. CTP contacts are provided by His-140, Lys-160, and Tyr-169.

Belongs to the tRNA nucleotidyltransferase/poly(A) polymerase family. Archaeal CCA-adding enzyme subfamily. In terms of assembly, homodimer. The cofactor is Mg(2+).

It carries out the reaction a tRNA precursor + 2 CTP + ATP = a tRNA with a 3' CCA end + 3 diphosphate. The enzyme catalyses a tRNA with a 3' CCA end + 2 CTP + ATP = a tRNA with a 3' CCACCA end + 3 diphosphate. In terms of biological role, catalyzes the addition and repair of the essential 3'-terminal CCA sequence in tRNAs without using a nucleic acid template. Adds these three nucleotides in the order of C, C, and A to the tRNA nucleotide-73, using CTP and ATP as substrates and producing inorganic pyrophosphate. tRNA 3'-terminal CCA addition is required both for tRNA processing and repair. Also involved in tRNA surveillance by mediating tandem CCA addition to generate a CCACCA at the 3' terminus of unstable tRNAs. While stable tRNAs receive only 3'-terminal CCA, unstable tRNAs are marked with CCACCA and rapidly degraded. This chain is CCA-adding enzyme, found in Halobacterium salinarum (strain ATCC 29341 / DSM 671 / R1).